Here is an 88-residue protein sequence, read N- to C-terminus: Small ribosomal subunit protein bS20 (88 aa).

Belongs to the bacterial ribosomal protein bS20 family.

Its function is as follows. Binds directly to 16S ribosomal RNA. In Nitrobacter winogradskyi (strain ATCC 25391 / DSM 10237 / CIP 104748 / NCIMB 11846 / Nb-255), this protein is Small ribosomal subunit protein bS20.